An 849-amino-acid chain; its full sequence is Trehalose-phosphatase (849 aa).

The glycosyltransferase stretch occupies residues 1–558 (MPSGAQGNTQ…VKALESHMTT (558 aa)).

It in the N-terminal section; belongs to the glycosyltransferase 20 family. This sequence in the C-terminal section; belongs to the trehalose phosphatase family. The cofactor is Mg(2+).

It localises to the cytoplasm. It is found in the nucleus. It catalyses the reaction alpha,alpha-trehalose 6-phosphate + H2O = alpha,alpha-trehalose + phosphate. Its pathway is carbohydrate biosynthesis. Its function is as follows. Phosphatase catalytic subunit of the trehalose synthase complex that catalyzes the production of trehalose from glucose-6-phosphate and UDP-glucose in a two step process. The chain is Trehalose-phosphatase (tps2) from Schizosaccharomyces pombe (strain 972 / ATCC 24843) (Fission yeast).